Consider the following 368-residue polypeptide: 1-aminocyclopropane-1-carboxylate synthase (368 aa).

Lysine 230 bears the N6-(pyridoxal phosphate)lysine mark.

This sequence belongs to the class-I pyridoxal-phosphate-dependent aminotransferase family. Homodimer. The cofactor is pyridoxal 5'-phosphate.

It catalyses the reaction S-adenosyl-L-methionine = 1-aminocyclopropane-1-carboxylate + S-methyl-5'-thioadenosine + H(+). Its pathway is alkene biosynthesis; ethylene biosynthesis via S-adenosyl-L-methionine; ethylene from S-adenosyl-L-methionine: step 1/2. Catalyzes the formation of 1-aminocyclopropane-1-carboxylate, a direct precursor of ethylene in higher plants. The protein is 1-aminocyclopropane-1-carboxylate synthase (ACS5) of Vigna radiata var. radiata (Mung bean).